We begin with the raw amino-acid sequence, 371 residues long: N-acetyldiaminopimelate deacetylase (371 aa).

Residue D68 is part of the active site. E127 acts as the Proton acceptor in catalysis.

Belongs to the peptidase M20A family. N-acetyldiaminopimelate deacetylase subfamily.

The enzyme catalyses N-acetyl-(2S,6S)-2,6-diaminopimelate + H2O = (2S,6S)-2,6-diaminopimelate + acetate. It functions in the pathway amino-acid biosynthesis; L-lysine biosynthesis via DAP pathway; LL-2,6-diaminopimelate from (S)-tetrahydrodipicolinate (acetylase route): step 3/3. Its function is as follows. Catalyzes the conversion of N-acetyl-diaminopimelate to diaminopimelate and acetate. The protein is N-acetyldiaminopimelate deacetylase of Listeria monocytogenes serotype 4b (strain CLIP80459).